The primary structure comprises 149 residues: Arginine repressor (149 aa).

This sequence belongs to the ArgR family.

It is found in the cytoplasm. It functions in the pathway amino-acid biosynthesis; L-arginine biosynthesis [regulation]. Its function is as follows. Regulates arginine biosynthesis genes. In Bacillus velezensis (strain DSM 23117 / BGSC 10A6 / LMG 26770 / FZB42) (Bacillus amyloliquefaciens subsp. plantarum), this protein is Arginine repressor.